The sequence spans 136 residues: Keratin-associated protein 15-1 (136 aa).

Belongs to the PMG family. Interacts with hair keratins.

In the hair cortex, hair keratin intermediate filaments are embedded in an interfilamentous matrix, consisting of hair keratin-associated proteins (KRTAP), which are essential for the formation of a rigid and resistant hair shaft through their extensive disulfide bond cross-linking with abundant cysteine residues of hair keratins. The matrix proteins include the high-sulfur and high-glycine-tyrosine keratins. This chain is Keratin-associated protein 15-1 (KRTAP15-1), found in Capra hircus (Goat).